The primary structure comprises 571 residues: Endonuclease/exonuclease/phosphatase family domain-containing protein 1 (571 aa).

The disordered stretch occupies residues 1–20 (MGSTLGCHRSIPRDPSDLSH). G2 carries the N-myristoyl glycine lipid modification. The span at 11 to 20 (IPRDPSDLSH) shows a compositional bias: basic and acidic residues. Residues S16, S21, and S25 each carry the phosphoserine modification. The HhH domain occupies 38 to 67 (ERLNINTATEEELMTLPGVTRAVARSIVEY). Phosphoserine is present on residues S106, S110, S162, and S175. The disordered stretch occupies residues 202–227 (SRPPSTHTNGGLTFTAKPHPSPTSLS). Over residues 204 to 213 (PPSTHTNGGL) the composition is skewed to polar residues. The residue at position 267 (T267) is a Phosphothreonine. S430 is modified (phosphoserine). Residues 548–571 (RKEGPRSGNGLTLERSEANIKHER) form a disordered region. A compositionally biased stretch (basic and acidic residues) spans 561 to 571 (ERSEANIKHER).

This is Endonuclease/exonuclease/phosphatase family domain-containing protein 1 (EEPD1) from Bos taurus (Bovine).